We begin with the raw amino-acid sequence, 273 residues long: Cell division cycle-associated protein 3 (273 aa).

Disordered regions lie at residues 1–231 (MGST…ALSE) and 251–273 (GGGA…LMES). Phosphoserine occurs at positions 29 and 31. Polar residues predominate over residues 32–45 (AGIQRTPIQVESSP). Position 37 is a phosphothreonine (Thr-37). Residues Ser-44 and Ser-67 each carry the phosphoserine modification. Residue Thr-75 is modified to Phosphothreonine. Positions 90-124 (KELSEVFETEVSETEVSESISSPVLGLPQETPLSS) are F-box-like. At Ser-93 the chain carries Phosphoserine. The span at 94 to 105 (EVFETEVSETEV) shows a compositional bias: acidic residues. Polar residues-rich tracts occupy residues 144 to 154 (PWSQTELNSKQ) and 164 to 175 (STETMVSGQTSD). Position 204 is a phosphoserine (Ser-204). Thr-207 carries the phosphothreonine modification. Over residues 210–220 (QDDNSPGTLTL) the composition is skewed to polar residues. Ser-214 carries the post-translational modification Phosphoserine. A Phosphothreonine modification is found at Thr-217. The short motif at 263 to 265 (KEN) is the KEN box element.

In terms of assembly, interacts with SKP1. Part of a SCF (SKP1-cullin-F-box) protein ligase complex. Post-translationally, ubiquitinated and degraded by the APC/C-Cdh1 complex.

The protein resides in the cytoplasm. It localises to the cytosol. Its pathway is protein modification; protein ubiquitination. Functionally, F-box-like protein which is required for entry into mitosis. Acts by participating in E3 ligase complexes that mediate the ubiquitination and degradation of WEE1 kinase at G2/M phase. This chain is Cell division cycle-associated protein 3 (Cdca3), found in Rattus norvegicus (Rat).